Here is a 106-residue protein sequence, read N- to C-terminus: Transcription factor TRY (106 aa).

The region spanning 34–71 is the Myb-like domain; sequence TEQEEDLIFRMYRLVGDRWDLIAGRVPGRQPEEIERYW. The segment at 83–106 is disordered; the sequence is RRQLHSSSHKHTKPHRPRFSIYPS. A compositionally biased stretch (basic residues) spans 84-100; sequence RQLHSSSHKHTKPHRPR.

As to quaternary structure, interacts with GL3 and thus prevents GL1 GL3 interaction. Also interacts with BHLH2. Expressed in roots, leaves, siliques and inflorescences.

The protein localises to the nucleus. Transcription factor. Involved in epidermal cell fate specification. Negative regulator of trichome development, including endoreplication, by lateral inhibition involving intercellular interactions. Promotes the formation of hair developing cells (trichoblasts) in H position in root epidermis, probably by inhibiting non-hair cell (atrichoblasts) formation. The polypeptide is Transcription factor TRY (TRY) (Arabidopsis thaliana (Mouse-ear cress)).